Consider the following 813-residue polypeptide: Leucine--tRNA ligase (813 aa).

The 'HIGH' region signature appears at 42–52; that stretch reads PYTSGNLHIGH. Residues 580-584 carry the 'KMSKS' region motif; it reads KMSKS. Residue lysine 583 coordinates ATP.

It belongs to the class-I aminoacyl-tRNA synthetase family.

Its subcellular location is the cytoplasm. It catalyses the reaction tRNA(Leu) + L-leucine + ATP = L-leucyl-tRNA(Leu) + AMP + diphosphate. The chain is Leucine--tRNA ligase from Dehalococcoides mccartyi (strain CBDB1).